The following is a 297-amino-acid chain: Adrenocorticotropic hormone receptor (297 aa).

Residues 1-23 lie on the Extracellular side of the membrane; the sequence is MKHITDLYESVNSTMSNKSDCPP. N-linked (GlcNAc...) asparagine glycosylation is found at Asn-12 and Asn-17. 2 disulfides stabilise this stretch: Cys-21–Cys-253 and Cys-245–Cys-251. A helical transmembrane segment spans residues 24–49; it reads VVLPEEVFFTISVIGVLENLIVLLAV. Residues 50-58 are Cytoplasmic-facing; that stretch reads IKNKNLQSP. A helical transmembrane segment spans residues 59 to 79; sequence MYFFICSLAISDMLGSLYKIL. Over 80 to 104 the chain is Extracellular; it reads ENILIIFRNMGYLEPRGGFESTADD. A helical membrane pass occupies residues 105 to 126; sequence VVDSLFILSLLGSICSLSAIAA. The Cytoplasmic segment spans residues 127-147; that stretch reads DRYITIFHALQYQRLVTPRRA. A helical membrane pass occupies residues 148-168; it reads AVVLLIIWACCIGSGITIVTF. The Extracellular portion of the chain corresponds to 169–180; the sequence is SHHVPAVIAFTA. Residues 181 to 199 traverse the membrane as a helical segment; sequence LFPLMLVFILCLYGHMFLL. The Cytoplasmic segment spans residues 200–217; sequence ARSHARRVSTLPRANMKG. A helical transmembrane segment spans residues 218–244; the sequence is AITLTVLLGVFIFCWAPFVLHILLMTF. Over 245-256 the chain is Extracellular; that stretch reads CPADPYCACYLA. A helical membrane pass occupies residues 257–278; sequence LFQVNAVLIMCNAIIDPFIYAF. Topologically, residues 279-297 are cytoplasmic; sequence RSPELRDAFKKMIICKRYP. A lipid anchor (S-palmitoyl cysteine) is attached at Cys-293.

Belongs to the G-protein coupled receptor 1 family. As to quaternary structure, homodimer. Interacts with corticotropin (ACTH). Interacts with MRAP; this interaction targets MC2R to the plasma membrane. Interacts with MRAP2; competing with MRAP for binding to MC2R and impairing the binding of corticotropin (ACTH). Ubiquitinated by MGRN1 that may be involved in post-endocytic trafficking and/or degradation of internalized receptor. In terms of tissue distribution, expressed in skin and adrenal gland tissues.

It is found in the cell membrane. In terms of biological role, hormone receptor primarily expressed in adrenal cortex that plays a key role in regulating adrenocortical function. Upon corticotropin (ACTH) binding, facilitates the release of adrenal glucocorticoids, including cortisol and corticosterone. In addition, MC2R is required for fetal and neonatal adrenal gland development. Mechanistically, activates adenylate cyclase (cAMP), the MAPK cascade as well as the cAMP-dependent protein kinase A pathway leading to steroidogenic factor 1/NR5A1-mediated transcriptional activation. The polypeptide is Adrenocorticotropic hormone receptor (MC2R) (Sus scrofa (Pig)).